The following is a 413-amino-acid chain: MAKTKEHINLAFIGHVDHGKSTLVGHLLLKAGAIAEQQLDDGENKFRFVMDKLGEERERGVTIDLAHQKFSTKKYDYTVVDCPGHRDFVKNMITGASQADAGVLVVAADDGVMPQTKEHVFLSKTLGINQLIVAINKIDLVDYDEAKFNELKDEVSALIKTVGFNPADVPFIPVSAFEGDNIKDASPNTSWYKGDTLMQALDNLAAPEKPVSLPLRIPIQDVYSITGVGTVPVGRVETGVMKKGENVIFEPAGASGEVKSIEMHHETFETAEPGDNIGFNVRGVGKNDIRRGDVAGHVDDAPAVAKEFDAQIVVLQHPGVITVGYTPVFHCHTSQVACTFLELTAKLDPATGQVAEENPDFLKTGNAAFVKVKPTKPMVIENAKKIPQMGRFAIRDMGQTVAAGLCIDVTPAK.

One can recognise a tr-type G domain in the interval 5–211 (KEHINLAFIG…DNLAAPEKPV (207 aa)). The tract at residues 14-21 (GHVDHGKS) is G1. 14-21 (GHVDHGKS) is a GTP binding site. Mg(2+) is bound at residue S21. The segment at 60 to 64 (GVTID) is G2. Positions 81-84 (DCPG) are G3. GTP is bound by residues 81 to 85 (DCPGH) and 136 to 139 (NKID). Residues 136-139 (NKID) form a G4 region. Residues 175-177 (SAF) are G5.

This sequence belongs to the TRAFAC class translation factor GTPase superfamily. Classic translation factor GTPase family. EF-Tu/EF-1A subfamily.

The protein resides in the cytoplasm. The catalysed reaction is GTP + H2O = GDP + phosphate + H(+). Its function is as follows. GTP hydrolase that promotes the GTP-dependent binding of aminoacyl-tRNA to the A-site of ribosomes during protein biosynthesis. This Methanobrevibacter smithii (strain ATCC 35061 / DSM 861 / OCM 144 / PS) protein is Elongation factor 1-alpha.